Here is a 438-residue protein sequence, read N- to C-terminus: Xylose isomerase (438 aa).

Residues His100 and Asp103 contribute to the active site. The Mg(2+) site is built by Glu231, Glu267, His270, Asp295, Asp306, Asp308, and Asp338.

This sequence belongs to the xylose isomerase family. In terms of assembly, homotetramer. The cofactor is Mg(2+).

The protein resides in the cytoplasm. The enzyme catalyses alpha-D-xylose = alpha-D-xylulofuranose. This chain is Xylose isomerase, found in Thermoanaerobacter sp. (strain X514).